Consider the following 243-residue polypeptide: Ribosomal RNA small subunit methyltransferase G (243 aa).

Residues G82, F87, 133-134 (AE), and R152 each bind S-adenosyl-L-methionine.

Belongs to the methyltransferase superfamily. RNA methyltransferase RsmG family.

It localises to the cytoplasm. In terms of biological role, specifically methylates the N7 position of a guanine in 16S rRNA. This is Ribosomal RNA small subunit methyltransferase G from Clostridium novyi (strain NT).